The sequence spans 343 residues: Protein RecA (343 aa).

Residue 66–73 participates in ATP binding; the sequence is GPESSGKT.

The protein belongs to the RecA family.

Its subcellular location is the cytoplasm. In terms of biological role, can catalyze the hydrolysis of ATP in the presence of single-stranded DNA, the ATP-dependent uptake of single-stranded DNA by duplex DNA, and the ATP-dependent hybridization of homologous single-stranded DNAs. It interacts with LexA causing its activation and leading to its autocatalytic cleavage. This chain is Protein RecA, found in Nitrosomonas europaea (strain ATCC 19718 / CIP 103999 / KCTC 2705 / NBRC 14298).